A 232-amino-acid chain; its full sequence is 2,3-bisphosphoglycerate-dependent phosphoglycerate mutase 1 (232 aa).

Substrate is bound by residues 8 to 15, 21 to 22, R58, 114 to 117, K125, 141 to 142, and 185 to 186; these read RHGQSLWN, TG, ERYY, RR, and GN. The Tele-phosphohistidine intermediate role is filled by H9. Residue E114 is the Proton donor/acceptor of the active site.

Belongs to the phosphoglycerate mutase family. BPG-dependent PGAM subfamily.

It catalyses the reaction (2R)-2-phosphoglycerate = (2R)-3-phosphoglycerate. It functions in the pathway carbohydrate degradation; glycolysis; pyruvate from D-glyceraldehyde 3-phosphate: step 3/5. In terms of biological role, catalyzes the interconversion of 2-phosphoglycerate and 3-phosphoglycerate. The chain is 2,3-bisphosphoglycerate-dependent phosphoglycerate mutase 1 from Gloeobacter violaceus (strain ATCC 29082 / PCC 7421).